Here is a 680-residue protein sequence, read N- to C-terminus: Protein terminal ear1 homolog (680 aa).

Residues 223-295 enclose the RRM domain; the sequence is SLVVLNSLPA…RRLVVEYTRP (73 aa). Disordered regions lie at residues 294–415 and 593–680; these read RPSL…SWRG and TEPV…GYTD. 2 stretches are compositionally biased toward low complexity: residues 328–340 and 379–403; these read PSQS…SGSG and SAAA…KQSQ. Residues 404–413 show a composition bias toward gly residues; that stretch reads KGGGGRGGSW. 2 stretches are compositionally biased toward low complexity: residues 602–621 and 634–648; these read SPAP…CAAS and SSSG…SSNA. Over residues 656 to 666 the composition is skewed to basic and acidic residues; it reads HGETGGDRGDD.

In terms of tissue distribution, highly expressed in shoot apex and inflorescence apex, at intermediate levels in roots and at low levels in leaf blade and leaf sheath.

Functionally, probable RNA-binding protein. Involved in the regular timing (plastochron) of lateral organs formation. May regulate the rate of leaf initiation and the duration of vegetative phase. Seems to be redundant to the function of PLASTOCHRON1, but to act in an independent pathway. In Oryza sativa subsp. indica (Rice), this protein is Protein terminal ear1 homolog (PLA2).